Consider the following 252-residue polypeptide: Type III pantothenate kinase (252 aa).

An ATP-binding site is contributed by 6 to 13 (DIGNTSTA). 104 to 107 (GADR) is a binding site for substrate. The active-site Proton acceptor is Asp-106. Asp-128 lines the K(+) pocket. Thr-131 contributes to the ATP binding site. Thr-183 lines the substrate pocket.

Belongs to the type III pantothenate kinase family. Homodimer. Requires NH4(+) as cofactor. K(+) is required as a cofactor.

It localises to the cytoplasm. The enzyme catalyses (R)-pantothenate + ATP = (R)-4'-phosphopantothenate + ADP + H(+). The protein operates within cofactor biosynthesis; coenzyme A biosynthesis; CoA from (R)-pantothenate: step 1/5. Its function is as follows. Catalyzes the phosphorylation of pantothenate (Pan), the first step in CoA biosynthesis. The sequence is that of Type III pantothenate kinase from Thermus thermophilus (strain ATCC 27634 / DSM 579 / HB8).